We begin with the raw amino-acid sequence, 20 residues long: Alpha-amylase (20 aa).

The enzyme catalyses Endohydrolysis of (1-&gt;4)-alpha-D-glucosidic linkages in polysaccharides containing three or more (1-&gt;4)-alpha-linked D-glucose units.. Strongly inhibited by Hg (2+). Inhibited by Zn (2+). Activated by Fe (2+), Mg (2+) and Ba (2+). Alpha-amylase active towards amylose, starch, amylopectin and maltodextrins. Has lower activity towards glycogen, and is not active towards alpha/beta-cyclodextrin. The chain is Alpha-amylase from Bacillus sp.